The chain runs to 247 residues: Probable transcriptional regulatory protein Asuc_1803 (247 aa).

It belongs to the TACO1 family.

Its subcellular location is the cytoplasm. This Actinobacillus succinogenes (strain ATCC 55618 / DSM 22257 / CCUG 43843 / 130Z) protein is Probable transcriptional regulatory protein Asuc_1803.